The primary structure comprises 30 residues: Kappa-sparatoxin-Hv1d (30 aa).

Disulfide bonds link Cys-3–Cys-17, Cys-10–Cys-22, and Cys-16–Cys-26.

As to expression, expressed by the venom gland.

It is found in the secreted. In terms of biological role, inhibitor of voltage-gated potassium channels of the Kv4/KCND family. Blocks calcium channels (Cav). This is Kappa-sparatoxin-Hv1d from Heteropoda venatoria (Brown huntsman spider).